Here is a 246-residue protein sequence, read N- to C-terminus: NH(3)-dependent NAD(+) synthetase (246 aa).

Gly29 to Ser36 contributes to the ATP binding site. Mg(2+) is bound at residue Asp35. Arg110 contacts deamido-NAD(+). Thr130 contributes to the ATP binding site. Position 135 (Glu135) interacts with Mg(2+). Positions 159 and 181 each coordinate ATP.

This sequence belongs to the NAD synthetase family. Homodimer.

The catalysed reaction is deamido-NAD(+) + NH4(+) + ATP = AMP + diphosphate + NAD(+) + H(+). It functions in the pathway cofactor biosynthesis; NAD(+) biosynthesis; NAD(+) from deamido-NAD(+) (ammonia route): step 1/1. Its function is as follows. Catalyzes the ATP-dependent amidation of deamido-NAD to form NAD. Uses ammonia as a nitrogen source. This is NH(3)-dependent NAD(+) synthetase from Campylobacter jejuni subsp. jejuni serotype O:6 (strain 81116 / NCTC 11828).